Reading from the N-terminus, the 825-residue chain is Endochitinase A1 (825 aa).

Positions 1-22 are cleaved as a signal peptide; it reads MVSSKLSFVATAVAALAPLASA. Residues 29–338 enclose the GH18 domain; it reads SNLAIYWGQG…DHMKDILLHC (310 aa). Glutamate 174 serves as the catalytic Proton donor. Disordered regions lie at residues 338 to 568, 680 to 736, and 750 to 792; these read CDPS…TTTA, PVTE…VSTS, and PLIL…YTQE. Positions 344-554 are enriched in low complexity; the sequence is VTSSSAVPSS…STDESSTTVG (211 aa). An N-linked (GlcNAc...) asparagine glycan is attached at asparagine 559. Residues 701 to 712 show a composition bias toward polar residues; the sequence is EGSNPTQPSGAS. Asparagine 717 carries an N-linked (GlcNAc...) asparagine glycan. The segment covering 772–792 has biased composition (polar residues); it reads PSGQNSGSSSHVPIPPSYTQE. The GPI-anchor amidated glycine moiety is linked to residue glycine 800. The propeptide at 801–825 is removed in mature form; sequence AASRVTGLGHGLVLTVLTLSAFFVL.

This sequence belongs to the glycosyl hydrolase 18 family. Chitinase class III subfamily. In terms of processing, O-mannosylated by pmt4.

The protein resides in the cell membrane. It localises to the secreted. It is found in the cell wall. The catalysed reaction is Random endo-hydrolysis of N-acetyl-beta-D-glucosaminide (1-&gt;4)-beta-linkages in chitin and chitodextrins.. The cyclic peptide natural product argifin acts as a specific inhibitor. Functionally, GPI-anchored chitinase involved in the degradation of chitin, a component of the cell walls of fungi and exoskeletal elements of some animals (including worms and arthropods). Required to reshape the cell wall at the sites where cell wall remodeling and/or cell wall maturation actively take place such as sites of conidia formation. In Aspergillus fumigatus (Neosartorya fumigata), this protein is Endochitinase A1 (chiA1).